Reading from the N-terminus, the 433-residue chain is Trigger factor (433 aa).

Residues 163–248 (GDFVTFDFKG…IKEIKVKELP (86 aa)) enclose the PPIase FKBP-type domain.

It belongs to the FKBP-type PPIase family. Tig subfamily.

The protein resides in the cytoplasm. The catalysed reaction is [protein]-peptidylproline (omega=180) = [protein]-peptidylproline (omega=0). In terms of biological role, involved in protein export. Acts as a chaperone by maintaining the newly synthesized protein in an open conformation. Functions as a peptidyl-prolyl cis-trans isomerase. The chain is Trigger factor from Geotalea uraniireducens (strain Rf4) (Geobacter uraniireducens).